The following is a 546-amino-acid chain: MTYGGRDQQYNKTNYKSRGGDFRGGRNSDRNSYNDRPQGGNYRGGFGGRSNYNQPQELIKPNWDEELPKLPTFEKNFYVEHESVRDRSDSEIAQFRKENEMTISGHDIPKPITTFDEAGFPDYVLNEVKAEGFDKPTGIQCQGWPMALSGRDMVGIAATGSGKTLSYCLPGIVHINAQPLLAPGDGPIVLVLAPTRELAVQIQTECSKFGHSSRIRNTCVYGGVPKSQQIRDLSRGSEIVIATPGRLIDMLEIGKTNLKRVTYLVLDEADRMLDMGFEPQIRKIVDQIRPDRQTLMWSATWPKEVKQLAADYLNDPIQVQVGSLELSASHNITQIVEVVSDFEKRDRLNKYLETASQDNEYKTLIFASTKRMCDDITKYLREDGWPALAIHGDKDQRERDWVLQEFRNGRSPIMVATDVAARGIDVKGINYVINYDMPGNIEDYVHRIGRTGRAGATGTAISFFTEQNKGLGAKLISIMREANQNIPPELLKYDRRSYGGGHPRYGGGRGGRGGYGRRGGYGGGRGGYGGNRQRDGGWGNRGRSNY.

A disordered region spans residues 1–56 (MTYGGRDQQYNKTNYKSRGGDFRGGRNSDRNSYNDRPQGGNYRGGFGGRSNYNQPQ). Residues arginine 18 and arginine 43 each carry the omega-N-methylarginine modification. Positions 18–33 (RGGDFRGGRNSDRNSY) are enriched in basic and acidic residues. Serine 88 and serine 90 each carry phosphoserine. The short motif at 113–141 (TTFDEAGFPDYVLNEVKAEGFDKPTGIQC) is the Q motif element. The Helicase ATP-binding domain occupies 144–319 (WPMALSGRDM…ADYLNDPIQV (176 aa)). 157–164 (AATGSGKT) provides a ligand contact to ATP. The short motif at 267 to 270 (DEAD) is the DEAD box element. Positions 347–494 (RLNKYLETAS…NIPPELLKYD (148 aa)) constitute a Helicase C-terminal domain. Residue lysine 474 forms a Glycyl lysine isopeptide (Lys-Gly) (interchain with G-Cter in ubiquitin) linkage. The tract at residues 493 to 546 (YDRRSYGGGHPRYGGGRGGRGGYGRRGGYGGGRGGYGGNRQRDGGWGNRGRSNY) is disordered. The segment covering 498 to 540 (YGGGHPRYGGGRGGRGGYGRRGGYGGGRGGYGGNRQRDGGWGN) has biased composition (gly residues). The segment at 505–530 (YGGGRGGRGGYGRRGGYGGGRGGYGG) is RNA-binding RGG-box. Arginine 509, arginine 512, arginine 518, and arginine 525 each carry dimethylated arginine; alternate. Omega-N-methylarginine; alternate occurs at positions 509, 512, 518, and 525.

Belongs to the DEAD box helicase family. DDX5/DBP2 subfamily. As to quaternary structure, interacts with UPF1. Associates with polysomes.

It localises to the cytoplasm. The protein resides in the nucleus. It carries out the reaction ATP + H2O = ADP + phosphate + H(+). Functionally, ATP-dependent RNA helicase involved nonsense-mediated mRNA decay and ribosome biogenesis through rRNA processing. Associates directly with chromatin, correlating with transcriptional activity. Required for assembly of mRNA-binding proteins YRA1, NAB2, and MEX67 onto poly(A)+ RNA. This is ATP-dependent RNA helicase DBP2 from Saccharomyces cerevisiae (strain ATCC 204508 / S288c) (Baker's yeast).